A 542-amino-acid chain; its full sequence is Glutamyl-tRNA(Gln) amidotransferase subunit B, mitochondrial (542 aa).

The protein belongs to the GatB/GatE family. GatB subfamily. In terms of assembly, subunit of the heterotrimeric GatFAB amidotransferase (AdT) complex, composed of A, B and F subunits.

Its subcellular location is the mitochondrion. The catalysed reaction is L-glutamyl-tRNA(Gln) + L-glutamine + ATP + H2O = L-glutaminyl-tRNA(Gln) + L-glutamate + ADP + phosphate + H(+). Allows the formation of correctly charged Gln-tRNA(Gln) through the transamidation of misacylated Glu-tRNA(Gln) in the mitochondria. The reaction takes place in the presence of glutamine and ATP through an activated gamma-phospho-Glu-tRNA(Gln). The chain is Glutamyl-tRNA(Gln) amidotransferase subunit B, mitochondrial from Candida glabrata (strain ATCC 2001 / BCRC 20586 / JCM 3761 / NBRC 0622 / NRRL Y-65 / CBS 138) (Yeast).